We begin with the raw amino-acid sequence, 156 residues long: Ribonuclease pancreatic (156 aa).

The N-terminal stretch at 1–28 (MALEKSLALLPLLVLVLLVLGWVQPSLG) is a signal peptide. The substrate site is built by Lys35 and Arg38. His40 functions as the Proton acceptor in the catalytic mechanism. 4 cysteine pairs are disulfide-bonded: Cys54/Cys112, Cys68/Cys123, Cys86/Cys138, and Cys93/Cys100. Asn62 carries an N-linked (GlcNAc...) asparagine glycan. 69–73 (KPVNT) contributes to the substrate binding site. An N-linked (GlcNAc...) asparagine glycan is attached at Asn90. Lys94 and Arg113 together coordinate substrate. The Proton donor role is filled by His147.

The protein belongs to the pancreatic ribonuclease family. As to quaternary structure, monomer. Interacts with and forms tight 1:1 complexes with RNH1. Dimerization of two such complexes may occur. Interaction with RNH1 inhibits this protein.

It is found in the secreted. It catalyses the reaction an [RNA] containing cytidine + H2O = an [RNA]-3'-cytidine-3'-phosphate + a 5'-hydroxy-ribonucleotide-3'-[RNA].. The enzyme catalyses an [RNA] containing uridine + H2O = an [RNA]-3'-uridine-3'-phosphate + a 5'-hydroxy-ribonucleotide-3'-[RNA].. Its function is as follows. Endonuclease that catalyzes the cleavage of RNA on the 3' side of pyrimidine nucleotides. Acts on single-stranded and double-stranded RNA. This chain is Ribonuclease pancreatic (RNASE1), found in Lagothrix lagotricha (Brown woolly monkey).